A 305-amino-acid polypeptide reads, in one-letter code: Glycine--tRNA ligase alpha subunit (305 aa).

It belongs to the class-II aminoacyl-tRNA synthetase family. Tetramer of two alpha and two beta subunits.

It is found in the cytoplasm. The enzyme catalyses tRNA(Gly) + glycine + ATP = glycyl-tRNA(Gly) + AMP + diphosphate. This Streptococcus pneumoniae (strain Hungary19A-6) protein is Glycine--tRNA ligase alpha subunit.